We begin with the raw amino-acid sequence, 307 residues long: 2-haloacid dehalogenase, configuration-inverting (307 aa).

This sequence belongs to the HAD-like hydrolase superfamily. S-2-haloalkanoic acid dehalogenase family. As to quaternary structure, homodimer.

The enzyme catalyses an (S)-2-haloacid + H2O = a (2R)-2-hydroxycarboxylate + a halide anion + H(+). It catalyses the reaction an (R)-2-haloacid + H2O = a (2S)-2-hydroxycarboxylate + a halide anion + H(+). Functionally, dehalogenates both (S)- and (R)-2-haloalkanoic acids to the corresponding (R)- and (S)-hydroxyalkanoic acids, respectively, with inversion of configuration at C-2. Acts on 2-haloalkanoic acids whose carbon chain lengths are five or less. In Pseudomonas sp. (strain 113), this protein is 2-haloacid dehalogenase, configuration-inverting.